A 309-amino-acid chain; its full sequence is Aspartate carbamoyltransferase catalytic subunit (309 aa).

Positions 55 and 56 each coordinate carbamoyl phosphate. Lys-85 provides a ligand contact to L-aspartate. The carbamoyl phosphate site is built by Arg-106, His-135, and Gln-138. Positions 168 and 230 each coordinate L-aspartate. Positions 268 and 269 each coordinate carbamoyl phosphate.

The protein belongs to the aspartate/ornithine carbamoyltransferase superfamily. ATCase family. Heterododecamer (2C3:3R2) of six catalytic PyrB chains organized as two trimers (C3), and six regulatory PyrI chains organized as three dimers (R2).

It carries out the reaction carbamoyl phosphate + L-aspartate = N-carbamoyl-L-aspartate + phosphate + H(+). It functions in the pathway pyrimidine metabolism; UMP biosynthesis via de novo pathway; (S)-dihydroorotate from bicarbonate: step 2/3. Its function is as follows. Catalyzes the condensation of carbamoyl phosphate and aspartate to form carbamoyl aspartate and inorganic phosphate, the committed step in the de novo pyrimidine nucleotide biosynthesis pathway. The polypeptide is Aspartate carbamoyltransferase catalytic subunit (Aliivibrio salmonicida (strain LFI1238) (Vibrio salmonicida (strain LFI1238))).